Consider the following 565-residue polypeptide: Formate--tetrahydrofolate ligase (565 aa).

Thr67–Thr74 contributes to the ATP binding site.

The protein belongs to the formate--tetrahydrofolate ligase family.

The enzyme catalyses (6S)-5,6,7,8-tetrahydrofolate + formate + ATP = (6R)-10-formyltetrahydrofolate + ADP + phosphate. It functions in the pathway one-carbon metabolism; tetrahydrofolate interconversion. The chain is Formate--tetrahydrofolate ligase from Saccharopolyspora erythraea (strain ATCC 11635 / DSM 40517 / JCM 4748 / NBRC 13426 / NCIMB 8594 / NRRL 2338).